A 135-amino-acid chain; its full sequence is Interleukin-4 (135 aa).

An N-terminal signal peptide occupies residues 1 to 24; that stretch reads MGLTSQLIPALVCLLVCTSHFVHG. 3 disulfides stabilise this stretch: cysteine 27-cysteine 135, cysteine 48-cysteine 85, and cysteine 70-cysteine 105. 2 N-linked (GlcNAc...) asparagine glycosylation sites follow: asparagine 62 and asparagine 96.

The protein belongs to the IL-4/IL-13 family.

It is found in the secreted. In terms of biological role, participates in at least several B-cell activation processes as well as of other cell types. It is a costimulator of DNA-synthesis. It induces the expression of class II MHC molecules on resting B-cells. It enhances both secretion and cell surface expression of IgE and IgG1. It also regulates the expression of the low affinity Fc receptor for IgE (CD23) on both lymphocytes and monocytes. Positively regulates IL31RA expression in macrophages. Stimulates autophagy in dendritic cells by interfering with mTORC1 signaling and through the induction of RUFY4. The sequence is that of Interleukin-4 (IL4) from Capra hircus (Goat).